We begin with the raw amino-acid sequence, 742 residues long: Collectin-12 (742 aa).

Over 1–37 (MKDDFAEEEEVQSFGYKRFGIQEGTQCTKCKNNWALK) the chain is Cytoplasmic. The chain crosses the membrane as a helical; Signal-anchor for type II membrane protein span at residues 38-58 (FSIILLYILCVLLTITIAILG). Topologically, residues 59 to 742 (YKVVEKMDNV…DMDKEQIFGV (684 aa)) are extracellular. 2 coiled-coil regions span residues 71 to 101 (GLETSHRRYTEKLTEVESDLKKLDDQAGQKA) and 271 to 334 (NNSA…QLEE). The segment at 439-605 (TILQGPPGPR…SEPTSVPEAN (167 aa)) is disordered. 2 Collagen-like domains span residues 467-526 (GQKG…SGDP) and 527-586 (GPPG…PGPP). Positions 475–492 (PGPPGPAGEKGPPGPIGP) are enriched in pro residues. 2 stretches are compositionally biased toward low complexity: residues 502–522 (RGSPGSKGQRGSPGKTGLPGP) and 532–556 (QGKDGPQGPQGPPGFQGLQGTVGEP). A compositionally biased stretch (pro residues) spans 571 to 589 (PGLPGPKGPPGPPGPPGPG). 3 cysteine pairs are disulfide-bonded: C607/C618, C635/C730, and C708/C722. One can recognise a C-type lectin domain in the interval 614 to 731 (YTEKCYYFSI…CEDVNNFICE (118 aa)). 5 residues coordinate Ca(2+): I644, N646, E650, D670, and E674. 3 residues coordinate a carbohydrate: K691, Q694, and D696. Residues Q694, D696, N697, E706, D707, N718, D719, and E731 each contribute to the Ca(2+) site. An a carbohydrate-binding site is contributed by E706. 2 residues coordinate a carbohydrate: N718 and D719.

As to expression, widely expressed.

The protein resides in the membrane. Scavenger receptor that displays several functions associated with host defense. Binds to carbohydrates. This is Collectin-12 (COLEC12) from Gallus gallus (Chicken).